The chain runs to 355 residues: GPN-loop GTPase 1 (355 aa).

Positions 1-30 (MAEKAENLPSSSAEASEEPSPQTGPNVNQK) are disordered. Residues 9–21 (PSSSAEASEEPSP) are compositionally biased toward low complexity. Position 40–45 (40–45 (GSGKTT)) interacts with GTP. A Gly-Pro-Asn (GPN)-loop; involved in dimer interface motif is present at residues 97-99 (GPN). 200–203 (NKAD) is a GTP binding site. A coiled-coil region spans residues 286 to 311 (EKVLAEKKLLDEEERKKRDEETLKGK).

This sequence belongs to the GPN-loop GTPase family. As to quaternary structure, heterodimer with GPN3. Binds to RNA polymerase II (RNAPII).

It is found in the cytoplasm. It localises to the nucleus. Small GTPase required for proper nuclear import of RNA polymerase II (RNAPII). May act at an RNAP assembly step prior to nuclear import. In Caenorhabditis elegans, this protein is GPN-loop GTPase 1.